A 300-amino-acid chain; its full sequence is ADP,ATP carrier protein 2 (300 aa).

Solcar repeat units lie at residues 8 to 100 (VAFI…YKQV), 113 to 203 (RYFI…ARGM), and 214 to 299 (VSWA…IKKV). Helical transmembrane passes span 10 to 39 (FIKD…LLLQ), 77 to 101 (LANV…KQVF), 112 to 132 (TRYF…SLCF), 181 to 201 (VSVQ…DTAR), and 213 to 233 (YVSW…SYPF). Positions 82 and 94 each coordinate ADP. Arg-237 is an ADP binding site. The segment at 237–242 (RRRMMM) is important for transport activity. The short motif at 237-242 (RRRMMM) is the Nucleotide carrier signature motif element. The chain crosses the membrane as a helical span at residues 276-293 (AFSNVLRGTGGAFVLVLY).

This sequence belongs to the mitochondrial carrier (TC 2.A.29) family. As to quaternary structure, monomer.

Its subcellular location is the mitochondrion inner membrane. The enzyme catalyses ADP(in) + ATP(out) = ADP(out) + ATP(in). With respect to regulation, the matrix-open state (m-state) is inhibited by the membrane-permeable bongkrekic acid (BKA). The cytoplasmic-open state (c-state) is inhibited by the membrane-impermeable toxic inhibitor carboxyatractyloside (CATR). ADP:ATP antiporter that mediates import of ADP into the mitochondrial matrix for ATP synthesis, and export of ATP out to fuel the cell. Cycles between the cytoplasmic-open state (c-state) and the matrix-open state (m-state): operates by the alternating access mechanism with a single substrate-binding site intermittently exposed to either the cytosolic (c-state) or matrix (m-state) side of the inner mitochondrial membrane. This is ADP,ATP carrier protein 2 from Anopheles gambiae (African malaria mosquito).